The chain runs to 217 residues: Small ribosomal subunit protein uS3c (217 aa).

Residues isoleucine 43–alanine 117 form the KH type-2 domain.

The protein belongs to the universal ribosomal protein uS3 family. As to quaternary structure, part of the 30S ribosomal subunit.

The protein resides in the plastid. It is found in the chloroplast. This Ranunculus macranthus (Large buttercup) protein is Small ribosomal subunit protein uS3c (rps3).